A 317-amino-acid polypeptide reads, in one-letter code: 4-hydroxy-3-methylbut-2-enyl diphosphate reductase (317 aa).

Residue cysteine 12 coordinates [4Fe-4S] cluster. (2E)-4-hydroxy-3-methylbut-2-enyl diphosphate-binding residues include histidine 41 and histidine 74. The dimethylallyl diphosphate site is built by histidine 41 and histidine 74. Isopentenyl diphosphate-binding residues include histidine 41 and histidine 74. Cysteine 97 serves as a coordination point for [4Fe-4S] cluster. Histidine 125 contacts (2E)-4-hydroxy-3-methylbut-2-enyl diphosphate. Position 125 (histidine 125) interacts with dimethylallyl diphosphate. Residue histidine 125 coordinates isopentenyl diphosphate. Glutamate 127 functions as the Proton donor in the catalytic mechanism. Residue threonine 168 participates in (2E)-4-hydroxy-3-methylbut-2-enyl diphosphate binding. Cysteine 198 contributes to the [4Fe-4S] cluster binding site. (2E)-4-hydroxy-3-methylbut-2-enyl diphosphate contacts are provided by serine 226, serine 227, asparagine 228, and serine 270. Dimethylallyl diphosphate contacts are provided by serine 226, serine 227, asparagine 228, and serine 270. Isopentenyl diphosphate contacts are provided by serine 226, serine 227, asparagine 228, and serine 270.

The protein belongs to the IspH family. As to quaternary structure, homodimer. [4Fe-4S] cluster serves as cofactor.

The catalysed reaction is isopentenyl diphosphate + 2 oxidized [2Fe-2S]-[ferredoxin] + H2O = (2E)-4-hydroxy-3-methylbut-2-enyl diphosphate + 2 reduced [2Fe-2S]-[ferredoxin] + 2 H(+). It carries out the reaction dimethylallyl diphosphate + 2 oxidized [2Fe-2S]-[ferredoxin] + H2O = (2E)-4-hydroxy-3-methylbut-2-enyl diphosphate + 2 reduced [2Fe-2S]-[ferredoxin] + 2 H(+). The protein operates within isoprenoid biosynthesis; dimethylallyl diphosphate biosynthesis; dimethylallyl diphosphate from (2E)-4-hydroxy-3-methylbutenyl diphosphate: step 1/1. It functions in the pathway isoprenoid biosynthesis; isopentenyl diphosphate biosynthesis via DXP pathway; isopentenyl diphosphate from 1-deoxy-D-xylulose 5-phosphate: step 6/6. Functionally, catalyzes the conversion of 1-hydroxy-2-methyl-2-(E)-butenyl 4-diphosphate (HMBPP) into a mixture of isopentenyl diphosphate (IPP) and dimethylallyl diphosphate (DMAPP). Acts in the terminal step of the DOXP/MEP pathway for isoprenoid precursor biosynthesis. The sequence is that of 4-hydroxy-3-methylbut-2-enyl diphosphate reductase from Yersinia pestis bv. Antiqua (strain Antiqua).